We begin with the raw amino-acid sequence, 127 residues long: uncharacterized protein (127 aa).

This is an uncharacterized protein from Acidianus two-tailed virus (ATV).